A 391-amino-acid polypeptide reads, in one-letter code: 12-oxophytodienoate reductase 3 (391 aa).

At M1 the chain carries N-acetylmethionine. T2 is subject to N-acetylthreonine; in 12-oxophytodienoate reductase 3, N-terminally processed. Residues 31–33 (PMT), G64, and Q106 contribute to the FMN site. H186 contacts substrate. Catalysis depends on Y191, which acts as the Proton donor. Position 238 (R238) interacts with FMN. R284 is a binding site for substrate. Residues 320-322 (SGG) and 343-344 (GR) contribute to the FMN site. The Microbody targeting signal motif lies at 389–391 (SRL).

It belongs to the NADH:flavin oxidoreductase/NADH oxidase family. The cofactor is FMN. In terms of tissue distribution, expressed in green seedling, leaves, flowers (anthers, pistil, petal and stamen), and to a lower extent in roots and siliques. Specifically expressed in filament during anther dehiscence initiation.

It localises to the peroxisome. The enzyme catalyses (1S,2S)-OPC-8 + NADP(+) = (9S,13S,15Z)-12-oxophyto-10,15-dienoate + NADPH + H(+). The protein operates within lipid metabolism; oxylipin biosynthesis. In terms of biological role, specifically cleaves olefinic bonds in cyclic enones. Involved in the biosynthesis of jasmonic acid (JA) and perhaps in biosynthesis or metabolism of other oxylipin signaling moleclules. Required for the spatial and temporal regulation of JA levels during dehiscence of anthers, promoting the stomium degeneration program. In vitro, reduces 9S,13S-12-oxophytodienoic acid (9S,13S-OPDA) and 9R,13R-OPDA to 9S,13S-OPC-8:0 and 9R,13R-OPC-8:0, respectively. Can detoxify the explosive 2,4,6-trinitrotoluene (TNT) in vitro by catalyzing its nitroreduction to form hydroxylamino-dinitrotoluene (HADNT). The sequence is that of 12-oxophytodienoate reductase 3 from Arabidopsis thaliana (Mouse-ear cress).